We begin with the raw amino-acid sequence, 348 residues long: D-erythrose-4-phosphate dehydrogenase (348 aa).

Residues 12 to 13 and Arg81 each bind NAD(+); that span reads RI. Substrate contacts are provided by residues 154–156, Arg200, 213–214, and Arg236; these read SCT and TK. The active-site Nucleophile is the Cys155. Asn318 is a binding site for NAD(+).

The protein belongs to the glyceraldehyde-3-phosphate dehydrogenase family. Epd subfamily. Homotetramer.

The protein resides in the cytoplasm. It carries out the reaction D-erythrose 4-phosphate + NAD(+) + H2O = 4-phospho-D-erythronate + NADH + 2 H(+). The protein operates within cofactor biosynthesis; pyridoxine 5'-phosphate biosynthesis; pyridoxine 5'-phosphate from D-erythrose 4-phosphate: step 1/5. Catalyzes the NAD-dependent conversion of D-erythrose 4-phosphate to 4-phosphoerythronate. The chain is D-erythrose-4-phosphate dehydrogenase from Salmonella agona (strain SL483).